A 193-amino-acid polypeptide reads, in one-letter code: MKTYQEFIAEASVVKAKGINKDEWTYRSGNGFDPKTAPIERYLATKASDFKAFAWEGLRWRTDLNIEVDGLKFAHIEDVVASNLDSEFVKADADLRRWNLKLFSKQKGPKFVPKAGKWVIDNKLAKAVNFAGLEFAKHKSSWKGLDAMAFRKEFADVMTKGGFKAEIDTSKGKFKDANIQYAYAVANAARGNS.

Positions 1–10 are excised as a propeptide; sequence MKTYQEFIAE.

Its function is as follows. Internal protein III is one of four proteins in a complex that functions in bacteriophage head maturation. The sequence is that of Internal protein III (ipi3) from Enterobacteria phage T4 (Bacteriophage T4).